A 426-amino-acid polypeptide reads, in one-letter code: Glutamate-1-semialdehyde 2,1-aminomutase (426 aa).

An N6-(pyridoxal phosphate)lysine modification is found at K265.

This sequence belongs to the class-III pyridoxal-phosphate-dependent aminotransferase family. HemL subfamily. As to quaternary structure, homodimer. Requires pyridoxal 5'-phosphate as cofactor.

The protein localises to the cytoplasm. The enzyme catalyses (S)-4-amino-5-oxopentanoate = 5-aminolevulinate. It participates in porphyrin-containing compound metabolism; protoporphyrin-IX biosynthesis; 5-aminolevulinate from L-glutamyl-tRNA(Glu): step 2/2. This chain is Glutamate-1-semialdehyde 2,1-aminomutase, found in Escherichia fergusonii (strain ATCC 35469 / DSM 13698 / CCUG 18766 / IAM 14443 / JCM 21226 / LMG 7866 / NBRC 102419 / NCTC 12128 / CDC 0568-73).